Here is a 557-residue protein sequence, read N- to C-terminus: MAAPMLRWGCRGRRWAFARVDGGSCHRRGAPTGSTSNQIRGESSVAQQPLHTAQKTRKGEHKWAAVVGLEIHAQISSNSKLFSGSQVRFSAPPNSLVSFFDASLPGTLPVLNRRCVEAAVMTGLALNCHINKKSLFDRKHYFYADLPAGYQITQQRLPIAVNGSLIYGVCAGKKQSQVIPKTVRIKQIQLEQDSGKSLHDNLRSQTLIDLNRAGVGLLEVVLEPDMSCGEEAATAVRELQLILQALGTSQANMAEGQLRVDANISVHHPGEPLGVRTEVKNLNSIRFLAKAIDYEIQRQINELENGGEILNETRSFHHKLGCTMSMRDKEGKQDYRFMPEPNLPPLVLYDATSLPAGADPQQVINIDQIRETLPELPSVTREKLVQQYGMLLEHSFTLLNEVGLLEFFQNVIKETRAEPKKVTSWVLNTFLGYLKQQNLAVSESPVTPSALAELLDLLDSRTISSSAAKQVFEELWKREGKTPGQIVSEKQLELMQDQGALEQLCHSVMEAHPQVVMDVKNRNPRAINKLIGLVRKATQSRADPVMIKEILEKKLSL.

A mitochondrion-targeting transit peptide spans 1-41 (MAAPMLRWGCRGRRWAFARVDGGSCHRRGAPTGSTSNQIRG). The interval 26-45 (HRRGAPTGSTSNQIRGESSV) is disordered. Over residues 32-45 (TGSTSNQIRGESSV) the composition is skewed to polar residues. The residue at position 529 (lysine 529) is an N6-succinyllysine.

It belongs to the GatB/GatE family. GatB subfamily. As to quaternary structure, subunit of the heterotrimeric GatCAB amidotransferase (AdT) complex, composed of A (QRSL1), B (GATB) and C (GATC) subunits. In terms of tissue distribution, predominantly expressed in tissues characterized by high rates of oxidative phosphorylation (OxPhos), including muscle and heart.

It is found in the mitochondrion. The catalysed reaction is L-glutamyl-tRNA(Gln) + L-glutamine + ATP + H2O = L-glutaminyl-tRNA(Gln) + L-glutamate + ADP + phosphate + H(+). Allows the formation of correctly charged Gln-tRNA(Gln) through the transamidation of misacylated Glu-tRNA(Gln) in the mitochondria. The reaction takes place in the presence of glutamine and ATP through an activated gamma-phospho-Glu-tRNA(Gln). This Homo sapiens (Human) protein is Glutamyl-tRNA(Gln) amidotransferase subunit B, mitochondrial.